The chain runs to 198 residues: Glycerol-3-phosphate acyltransferase (198 aa).

5 helical membrane-spanning segments follow: residues 10–30, 57–77, 86–106, 118–138, and 160–180; these read LIPILFASYLIGSIPFSWILV, GISFLVLLLDIFKSVLVILIL, IMYLTGFTVVLGHIFPVWFLF, VVLSINIKIFFLFIITWAVVF, and AVTENFNSSIFYIAMSIIVLI.

This sequence belongs to the PlsY family. Probably interacts with PlsX.

The protein resides in the cell inner membrane. The catalysed reaction is an acyl phosphate + sn-glycerol 3-phosphate = a 1-acyl-sn-glycero-3-phosphate + phosphate. It participates in lipid metabolism; phospholipid metabolism. Its function is as follows. Catalyzes the transfer of an acyl group from acyl-phosphate (acyl-PO(4)) to glycerol-3-phosphate (G3P) to form lysophosphatidic acid (LPA). This enzyme utilizes acyl-phosphate as fatty acyl donor, but not acyl-CoA or acyl-ACP. The polypeptide is Glycerol-3-phosphate acyltransferase (Anaplasma marginale (strain St. Maries)).